Reading from the N-terminus, the 393-residue chain is Formate-dependent phosphoribosylglycinamide formyltransferase (393 aa).

Residues 22–23 (EL) and Glu82 each bind N(1)-(5-phospho-beta-D-ribosyl)glycinamide. Residues Arg114, Lys155, 160 to 165 (SSGKGQ), 195 to 198 (EGFI), and Glu203 each bind ATP. Positions 119 to 308 (RLAAEELGLP…EFALHARAIL (190 aa)) constitute an ATP-grasp domain. Positions 267 and 279 each coordinate Mg(2+). N(1)-(5-phospho-beta-D-ribosyl)glycinamide-binding positions include Asp286, Lys356, and 363–364 (RR).

The protein belongs to the PurK/PurT family. Homodimer.

It carries out the reaction N(1)-(5-phospho-beta-D-ribosyl)glycinamide + formate + ATP = N(2)-formyl-N(1)-(5-phospho-beta-D-ribosyl)glycinamide + ADP + phosphate + H(+). The protein operates within purine metabolism; IMP biosynthesis via de novo pathway; N(2)-formyl-N(1)-(5-phospho-D-ribosyl)glycinamide from N(1)-(5-phospho-D-ribosyl)glycinamide (formate route): step 1/1. In terms of biological role, involved in the de novo purine biosynthesis. Catalyzes the transfer of formate to 5-phospho-ribosyl-glycinamide (GAR), producing 5-phospho-ribosyl-N-formylglycinamide (FGAR). Formate is provided by PurU via hydrolysis of 10-formyl-tetrahydrofolate. This is Formate-dependent phosphoribosylglycinamide formyltransferase from Pseudomonas aeruginosa (strain LESB58).